The following is a 31-amino-acid chain: Protamine PTP4 (31 aa).

Residues 1–31 (MPRRRRASRRIRRRRRPRVSRRRRGGRRRRR) form a disordered region.

Testis.

It localises to the nucleus. The protein resides in the chromosome. Functionally, protamines substitute for histones in the chromatin of sperm during the haploid phase of spermatogenesis. They compact sperm DNA into a highly condensed, stable and inactive complex. This chain is Protamine PTP4, found in Oncorhynchus mykiss (Rainbow trout).